The chain runs to 209 residues: Probable nicotinate-nucleotide adenylyltransferase (209 aa).

Belongs to the NadD family.

The catalysed reaction is nicotinate beta-D-ribonucleotide + ATP + H(+) = deamido-NAD(+) + diphosphate. The protein operates within cofactor biosynthesis; NAD(+) biosynthesis; deamido-NAD(+) from nicotinate D-ribonucleotide: step 1/1. Its function is as follows. Catalyzes the reversible adenylation of nicotinate mononucleotide (NaMN) to nicotinic acid adenine dinucleotide (NaAD). The polypeptide is Probable nicotinate-nucleotide adenylyltransferase (Hydrogenovibrio crunogenus (strain DSM 25203 / XCL-2) (Thiomicrospira crunogena)).